A 259-amino-acid polypeptide reads, in one-letter code: 5'-nucleotidase SurE (259 aa).

Residues aspartate 8, aspartate 9, serine 40, and asparagine 95 each coordinate a divalent metal cation.

The protein belongs to the SurE nucleotidase family. A divalent metal cation serves as cofactor.

The protein localises to the cytoplasm. It carries out the reaction a ribonucleoside 5'-phosphate + H2O = a ribonucleoside + phosphate. Its function is as follows. Nucleotidase that shows phosphatase activity on nucleoside 5'-monophosphates. The protein is 5'-nucleotidase SurE of Oleidesulfovibrio alaskensis (strain ATCC BAA-1058 / DSM 17464 / G20) (Desulfovibrio alaskensis).